The primary structure comprises 243 residues: 3-deoxy-manno-octulosonate cytidylyltransferase (243 aa).

The protein belongs to the KdsB family.

The protein resides in the cytoplasm. The catalysed reaction is 3-deoxy-alpha-D-manno-oct-2-ulosonate + CTP = CMP-3-deoxy-beta-D-manno-octulosonate + diphosphate. Its pathway is nucleotide-sugar biosynthesis; CMP-3-deoxy-D-manno-octulosonate biosynthesis; CMP-3-deoxy-D-manno-octulosonate from 3-deoxy-D-manno-octulosonate and CTP: step 1/1. It functions in the pathway bacterial outer membrane biogenesis; lipopolysaccharide biosynthesis. Functionally, activates KDO (a required 8-carbon sugar) for incorporation into bacterial lipopolysaccharide in Gram-negative bacteria. This Bartonella tribocorum (strain CIP 105476 / IBS 506) protein is 3-deoxy-manno-octulosonate cytidylyltransferase.